The following is a 198-amino-acid chain: Hookworm platelet inhibitor 1 (198 aa).

A signal peptide spans methionine 1–alanine 17. 5 disulfide bridges follow: cysteine 24–cysteine 65, cysteine 78–cysteine 146, cysteine 141–cysteine 154, cysteine 174–cysteine 186, and cysteine 177–cysteine 195.

This sequence belongs to the CRISP family. Monomer. In terms of tissue distribution, detected in cephalic glands.

The protein localises to the secreted. In terms of biological role, hookworms inhibitor of platelet aggregation and adhesion. Native protein inhibits platelet aggregation induced by ADP, epinephrine, and thrombin. In addition, it prevents adhesion of resting platelets to immobilized fibrinogen and collagen. May act by binding to glycoprotein IIb/IIIa (ITGA2B/ITGB3) and integrin alpha-2/beta-1 (ITGA1/ITGB1), respectively. It is noteworthy that the recombinant protein fails to inhibit binding to fibrinogen (through ITGA2B/ITGB3) and collagen (through ITGA1/ITGB1). The polypeptide is Hookworm platelet inhibitor 1 (Ancylostoma caninum (Dog hookworm)).